Reading from the N-terminus, the 283-residue chain is uncharacterized protein (283 aa).

5 consecutive transmembrane segments (helical) span residues 8 to 28, 38 to 58, 73 to 93, 100 to 120, and 175 to 195; these read LILSIVGNILLGLIKIIIGYV, GIHSLSDVITSIIGIIGVKIA, FECLFSFFIGLALFFTAYEIG, IIYGEVIEVNAIMVGVAILSI, and AIAGIIVALMIAKVAFDICLT.

This sequence belongs to the cation diffusion facilitator (CDF) transporter (TC 2.A.4) family.

The protein resides in the cell membrane. This is an uncharacterized protein from Methanocaldococcus jannaschii (strain ATCC 43067 / DSM 2661 / JAL-1 / JCM 10045 / NBRC 100440) (Methanococcus jannaschii).